The following is a 429-amino-acid chain: Small ribosomal subunit protein uS5m (429 aa).

Positions 108–127 (AGAKKGRGKRTKKKKRKDLN) are disordered. Over residues 111–125 (KKGRGKRTKKKKRKD) the composition is skewed to basic residues. Residues 218–282 (FDTRILEVRN…NRAVHHLYYI (65 aa)) enclose the S5 DRBM domain.

It belongs to the universal ribosomal protein uS5 family. In terms of assembly, component of the mitochondrial ribosome small subunit (28S) which comprises a 12S rRNA and about 30 distinct proteins.

It is found in the mitochondrion. The polypeptide is Small ribosomal subunit protein uS5m (MRPS5) (Pongo abelii (Sumatran orangutan)).